A 278-amino-acid chain; its full sequence is Digeranylgeranylglyceryl phosphate synthase (278 aa).

8 helical membrane-spanning segments follow: residues 12–32 (LKNC…ASYF), 34–54 (LAMV…CGFG), 92–112 (LVVM…MAVL), 129–149 (IIGN…GGIA), 153–173 (IDVT…REII), 204–224 (FLLI…FFGI), 226–246 (YMIS…KLVF), and 257–277 (SRNI…GSLF).

It belongs to the UbiA prenyltransferase family. DGGGP synthase subfamily. Requires Mg(2+) as cofactor.

The protein localises to the cell membrane. It carries out the reaction sn-3-O-(geranylgeranyl)glycerol 1-phosphate + (2E,6E,10E)-geranylgeranyl diphosphate = 2,3-bis-O-(geranylgeranyl)-sn-glycerol 1-phosphate + diphosphate. The protein operates within membrane lipid metabolism; glycerophospholipid metabolism. Prenyltransferase that catalyzes the transfer of the geranylgeranyl moiety of geranylgeranyl diphosphate (GGPP) to the C2 hydroxyl of (S)-3-O-geranylgeranylglyceryl phosphate (GGGP). This reaction is the second ether-bond-formation step in the biosynthesis of archaeal membrane lipids. In Methanococcus maripaludis (strain DSM 14266 / JCM 13030 / NBRC 101832 / S2 / LL), this protein is Digeranylgeranylglyceryl phosphate synthase.